Here is a 324-residue protein sequence, read N- to C-terminus: Glyoxylate/hydroxypyruvate reductase B (324 aa).

Catalysis depends on residues R237 and E266. The active-site Proton donor is H285.

Belongs to the D-isomer specific 2-hydroxyacid dehydrogenase family. GhrB subfamily. In terms of assembly, homodimer.

The protein resides in the cytoplasm. It carries out the reaction glycolate + NADP(+) = glyoxylate + NADPH + H(+). The enzyme catalyses (R)-glycerate + NAD(+) = 3-hydroxypyruvate + NADH + H(+). It catalyses the reaction (R)-glycerate + NADP(+) = 3-hydroxypyruvate + NADPH + H(+). In terms of biological role, catalyzes the NADPH-dependent reduction of glyoxylate and hydroxypyruvate into glycolate and glycerate, respectively. This is Glyoxylate/hydroxypyruvate reductase B from Salmonella schwarzengrund (strain CVM19633).